Consider the following 270-residue polypeptide: MIMTRKNILSVKRIVVKIGTSSLILPNGKINLSNIDELAFVLSDLNNKGYEVILVTSGAIGVGLNVLGIDKRPKGIADQQALASIGQVELMSLYTQMFRRYSQKVSQLLLTRDVTDFPTSRENAENALNALLGLGIIPIINENDAIAVDEMDHQTKFGDNDKLGAIVSKLVNADLLIMLSDIDGLFDKNPSIYDDAKIFNEIHEITDELRQMAGGAGSRFGTGGMTSKLAAAQILFENGQEMVLTNGERIREIKEIIEGREIGTYFHQKS.

Position 17 (Lys-17) interacts with ATP. Substrate-binding residues include Ser-57, Asp-144, and Asn-160. ATP is bound by residues 180–181 (SD) and 222–228 (TGGMTSK).

Belongs to the glutamate 5-kinase family.

Its subcellular location is the cytoplasm. The enzyme catalyses L-glutamate + ATP = L-glutamyl 5-phosphate + ADP. It functions in the pathway amino-acid biosynthesis; L-proline biosynthesis; L-glutamate 5-semialdehyde from L-glutamate: step 1/2. Functionally, catalyzes the transfer of a phosphate group to glutamate to form L-glutamate 5-phosphate. The chain is Glutamate 5-kinase from Lactococcus lactis subsp. lactis (strain IL1403) (Streptococcus lactis).